The sequence spans 759 residues: ARF GTPase-activating protein GIT2 (759 aa).

Positions Met-1–Asp-124 constitute an Arf-GAP domain. The segment at Cys-11–Cys-34 adopts a C4-type zinc-finger fold. ANK repeat units lie at residues Asp-132 to Phe-161, Lys-166 to Thr-195, and Ser-199 to Asp-228. Residues Gln-379–Asp-422 form a disordered region. Acidic residues predominate over residues Gln-385–Leu-403. Phosphoserine is present on residues Ser-394 and Ser-397. At Thr-401 the chain carries Phosphothreonine. Phosphoserine is present on residues Ser-415, Ser-418, and Ser-421. Residues Leu-437–Gln-478 are a coiled coil. Residues Thr-480–Ser-499 show a composition bias toward polar residues. 2 disordered regions span residues Thr-480–Arg-538 and Val-554–Val-643. Tyr-484 carries the phosphotyrosine modification. The segment covering Thr-555 to Trp-569 has biased composition (low complexity). Phosphoserine occurs at positions 559, 562, and 570. The segment covering Ser-570–Lys-583 has biased composition (basic and acidic residues). Over residues Gln-584–Asn-597 the composition is skewed to polar residues. A Phosphothreonine modification is found at Thr-587. At Ser-614 the chain carries Phosphoserine.

May form heterooligomers with GIT1. Directly interacts with protein Piccolo/PCLO. Interacts with PPFIA1 and PPFIA2. Interacts with ARHGEF7. Identified in a complex with ARHGEF6 and BIN2. Interacts with PAK3. Interacts with PXN/paxillin. Interacts with TGFB1I1. Forms a complex with EFNB1 and GRB4/NCK2.

GTPase-activating protein for ADP ribosylation factor family members, including ARF1. The protein is ARF GTPase-activating protein GIT2 (GIT2) of Homo sapiens (Human).